A 278-amino-acid chain; its full sequence is Elongation factor Ts (278 aa).

An involved in Mg(2+) ion dislocation from EF-Tu region spans residues 80–83 (TDFV).

The protein belongs to the EF-Ts family.

Its subcellular location is the cytoplasm. Its function is as follows. Associates with the EF-Tu.GDP complex and induces the exchange of GDP to GTP. It remains bound to the aminoacyl-tRNA.EF-Tu.GTP complex up to the GTP hydrolysis stage on the ribosome. The protein is Elongation factor Ts of Pseudarthrobacter chlorophenolicus (strain ATCC 700700 / DSM 12829 / CIP 107037 / JCM 12360 / KCTC 9906 / NCIMB 13794 / A6) (Arthrobacter chlorophenolicus).